We begin with the raw amino-acid sequence, 805 residues long: Angiotensin-converting enzyme 2 (805 aa).

Residues M1–A17 form the signal peptide. The Extracellular portion of the chain corresponds to Q18–T740. The Peptidase M2 domain occupies S19 to D607. The segment at E30–Y41 is interaction with SARS S protein. N53 carries an N-linked (GlcNAc...) asparagine glycan. Interaction with SARS S protein regions lie at residues T82 to P84 and D90 to I93. A disulfide bridge links C133 with C141. R169 is a binding site for chloride. N216 carries N-linked (GlcNAc...) asparagine glycosylation. R273 is a substrate binding site. N-linked (GlcNAc...) asparagine glycosylation is present at N322. Residues C344 and C361 are joined by a disulfide bond. H345–P346 provides a ligand contact to substrate. The interaction with SARS S protein stretch occupies residues K353–R357. H374 is a Zn(2+) binding site. The Proton acceptor role is filled by E375. 2 residues coordinate Zn(2+): H378 and E402. 2 residues coordinate chloride: W477 and K481. H505 functions as the Proton donor in the catalytic mechanism. A substrate-binding site is contributed by Y515. Residues C530 and C542 are joined by a disulfide bond. N546 is a glycosylation site (N-linked (GlcNAc...) asparagine). Positions S614 to F805 constitute a Collectrin-like domain. Residues R652 to K659 are essential for cleavage by ADAM17. N-linked (GlcNAc...) asparagine glycosylation is found at N660 and N690. An essential for cleavage by TMPRSS11D and TMPRSS2 region spans residues R697–R716. Residues I741–I761 form a helical membrane-spanning segment. Over V762 to F805 the chain is Cytoplasmic. The disordered stretch occupies residues N771–F805. The LIR signature appears at E778–L786. Residue Y781 is modified to Phosphotyrosine. An Endocytic sorting signal motif is present at residues Y781–V784. The SH2-binding motif lies at Y781–D785. S783 bears the Phosphoserine mark. Residues N792–F795 carry the PTB motif. The PDZ-binding signature appears at T803–F805.

The protein belongs to the peptidase M2 family. As to quaternary structure, homodimer. Interacts with the catalytically active form of TMPRSS2. Interacts with SLC6A19; this interaction is essential for expression and function of SLC6A19 in intestine. Interacts with ITGA5:ITGB1. Probably interacts (via endocytic sorting signal motif) with AP2M1; the interaction is inhibited by phosphorylation of Tyr-781. Interacts (via PDZ-binding motif) with NHERF1 (via PDZ domains); the interaction may enhance ACE2 membrane residence. (Microbial infection) Interacts with SARS-CoV S protein. Zn(2+) is required as a cofactor. Requires chloride as cofactor. In terms of processing, proteolytic cleavage by ADAM17 generates a secreted form. Also cleaved by serine proteases: TMPRSS2, TMPRSS11D and HPN/TMPRSS1. Post-translationally, phosphorylated. Phosphorylation at Tyr-781 probably inhibits interaction with AP2M1 and enables interactions with proteins containing SH2 domains.

The protein resides in the secreted. The protein localises to the cell membrane. It is found in the cytoplasm. Its subcellular location is the cell projection. It localises to the cilium. The protein resides in the apical cell membrane. The catalysed reaction is angiotensin II + H2O = angiotensin-(1-7) + L-phenylalanine. It catalyses the reaction angiotensin I + H2O = angiotensin-(1-9) + L-leucine. Essential counter-regulatory carboxypeptidase of the renin-angiotensin hormone system that is a critical regulator of blood volume, systemic vascular resistance, and thus cardiovascular homeostasis. Converts angiotensin I to angiotensin 1-9, a nine-amino acid peptide with anti-hypertrophic effects in cardiomyocytes, and angiotensin II to angiotensin 1-7, which then acts as a beneficial vasodilator and anti-proliferation agent, counterbalancing the actions of the vasoconstrictor angiotensin II. Also removes the C-terminal residue from three other vasoactive peptides, neurotensin, kinetensin, and des-Arg bradykinin, but is not active on bradykinin. Also cleaves other biological peptides, such as apelins, casomorphins and dynorphin A. Plays an important role in amino acid transport by acting as binding partner of amino acid transporter SLC6A19 in intestine, regulating trafficking, expression on the cell surface, and its catalytic activity. Functionally, (Microbial infection) Acts as a receptor for human coronavirus SARS. This chain is Angiotensin-converting enzyme 2 (ACE2), found in Paguma larvata (Masked palm civet).